The sequence spans 158 residues: uncharacterized protein (158 aa).

This is an uncharacterized protein from Bacillus subtilis (Bacteriophage phi-105).